A 554-amino-acid chain; its full sequence is Glucose-6-phosphate isomerase (554 aa).

N-acetylserine is present on S2. The residue at position 53 (T53) is a Phosphothreonine. D-glucose 6-phosphate-binding positions include 168–169 (GS), 218–223 (SKTFTT), Q363, E367, H398, and K520. T220 carries the phosphothreonine modification. The active-site Proton donor is the E367. Active-site residues include H398 and K520.

It belongs to the GPI family. Homodimer.

The protein resides in the cytoplasm. It localises to the cytosol. The enzyme catalyses alpha-D-glucose 6-phosphate = beta-D-fructose 6-phosphate. The protein operates within carbohydrate degradation; glycolysis; D-glyceraldehyde 3-phosphate and glycerone phosphate from D-glucose: step 2/4. Its activity is regulated as follows. Strongly inhibited by the polyol (sugar alcohol) phosphate D-glucitol 6-phosphate (D-sorbitol 6-phosphate). Also inhibited by the polyol (sugar alcohol) phosphate D-ribitol 5-phosphate. In the cytoplasm, catalyzes the conversion of glucose-6-phosphate to fructose-6-phosphate, the second step in glycolysis, and the reverse reaction during gluconeogenesis. This chain is Glucose-6-phosphate isomerase (PGI1), found in Saccharomyces cerevisiae (strain ATCC 204508 / S288c) (Baker's yeast).